The chain runs to 359 residues: Non-functional pseudokinase ZRK2 (359 aa).

The segment covering 1–10 (MKSMVKKLKQ) has biased composition (basic residues). Residues 1–20 (MKSMVKKLKQSLRSGSLEKR) form a disordered region. In terms of domain architecture, Protein kinase spans 64-356 (LKATSNFGSS…KELKQIETLF (293 aa)). ATP-binding positions include 70–78 (FGSSCFVTA) and Lys97.

Belongs to the protein kinase superfamily. Ser/Thr protein kinase family. ZRK subfamily.

The chain is Non-functional pseudokinase ZRK2 from Arabidopsis thaliana (Mouse-ear cress).